A 546-amino-acid chain; its full sequence is CTP synthase (546 aa).

Positions 1–266 (MTTRYIFVTG…DQLVTKRFGI (266 aa)) are amidoligase domain. Ser14 is a CTP binding site. Ser14 contributes to the UTP binding site. Residues 15-20 (SLGKGI) and Asp72 each bind ATP. Positions 72 and 140 each coordinate Mg(2+). CTP-binding positions include 147–149 (DIE), 187–192 (KTKPTQ), and Lys223. UTP contacts are provided by residues 187–192 (KTKPTQ) and Lys223. 239 to 241 (KDV) serves as a coordination point for ATP. One can recognise a Glutamine amidotransferase type-1 domain in the interval 291-542 (TIGMVGKYIE…VAAAYTYQKR (252 aa)). L-glutamine is bound at residue Gly352. The active-site Nucleophile; for glutamine hydrolysis is Cys379. Residues 380–383 (LGMQ), Glu403, and Arg470 each bind L-glutamine. Catalysis depends on residues His515 and Glu517.

This sequence belongs to the CTP synthase family. As to quaternary structure, homotetramer.

It carries out the reaction UTP + L-glutamine + ATP + H2O = CTP + L-glutamate + ADP + phosphate + 2 H(+). The enzyme catalyses L-glutamine + H2O = L-glutamate + NH4(+). It catalyses the reaction UTP + NH4(+) + ATP = CTP + ADP + phosphate + 2 H(+). It participates in pyrimidine metabolism; CTP biosynthesis via de novo pathway; CTP from UDP: step 2/2. Its activity is regulated as follows. Allosterically activated by GTP, when glutamine is the substrate; GTP has no effect on the reaction when ammonia is the substrate. The allosteric effector GTP functions by stabilizing the protein conformation that binds the tetrahedral intermediate(s) formed during glutamine hydrolysis. Inhibited by the product CTP, via allosteric rather than competitive inhibition. Its function is as follows. Catalyzes the ATP-dependent amination of UTP to CTP with either L-glutamine or ammonia as the source of nitrogen. Regulates intracellular CTP levels through interactions with the four ribonucleotide triphosphates. This is CTP synthase from Shewanella halifaxensis (strain HAW-EB4).